Consider the following 643-residue polypeptide: Phosphatidylinositol-3,5-bisphosphate 3-phosphatase MTMR2 (643 aa).

2 stretches are compositionally biased toward polar residues: residues 1 to 12 (MEKSSSCESLGS) and 23 to 40 (DSLSSASTSHSENSVHTK). The disordered stretch occupies residues 1 to 56 (MEKSSSCESLGSQPAAARPPSVDSLSSASTSHSENSVHTKSASVVSSDSISTSADN). A phosphoserine mark is found at Ser-6 and Ser-9. The segment covering 41 to 55 (SASVVSSDSISTSAD) has biased composition (low complexity). Ser-58 bears the Phosphoserine mark. Positions 68-139 (NKLAEMEEPP…GVINRVEKIG (72 aa)) constitute a GRAM domain. The 376-residue stretch at 205–580 (GWKLYDPLLE…RHLELWVGYY (376 aa)) folds into the Myotubularin phosphatase domain. A 1,2-diacyl-sn-glycero-3-phospho-(1D-myo-inositol-3,5-bisphosphate)-binding residues include Asn-330, Asn-355, and Ile-356. 3 residues coordinate a 1,2-diacyl-sn-glycero-3-phospho-(1D-myo-inositol-3-phosphate): Asn-330, Asn-355, and Ile-356. Cys-417 serves as the catalytic Phosphocysteine intermediate. A 1,2-diacyl-sn-glycero-3-phospho-(1D-myo-inositol-3,5-bisphosphate) is bound by residues Ser-418, Asp-419, Gly-420, Trp-421, Asp-422, Arg-423, Arg-459, and Arg-463. A 1,2-diacyl-sn-glycero-3-phospho-(1D-myo-inositol-3-phosphate)-binding residues include Ser-418, Asp-419, Gly-420, Trp-421, Asp-422, and Arg-423. Arg-463 serves as a coordination point for a 1,2-diacyl-sn-glycero-3-phospho-(1D-myo-inositol-3-phosphate). A coiled-coil region spans residues 593 to 627 (IHNRYKELLAKRAELQKKVEELQREISNRSTSSSE). Residues 615–643 (QREISNRSTSSSERASSPAQCVTPVQTVV) are disordered. Residues 620–631 (NRSTSSSERASS) show a composition bias toward low complexity. Polar residues predominate over residues 632–643 (PAQCVTPVQTVV).

It belongs to the protein-tyrosine phosphatase family. Non-receptor class myotubularin subfamily. In terms of assembly, homodimer (via coiled-coil domain). Heterotetramer consisting of one MTMR2 dimer and one SBF2/MTMR13 dimer; specifically in peripheral nerves stabilizes SBF2/MTMR13 at the membranes and increases MTMR2 catalytic activity towards phosphatidylinositol 3,5-bisphosphate and to a lesser extent towards phosphatidylinositol 3-phosphate. Heterodimer with SBF1/MTMR5; acts as an adapter for the phosphatase MTMR2 to regulate MTMR2 catalytic activity and subcellular location. Heterodimer with MTMR12. In terms of processing, phosphorylation at Ser-58 decreases MTMR2 localization to endocytic vesicular structures.

It is found in the cytoplasm. The protein localises to the early endosome membrane. The protein resides in the perinuclear region. It localises to the cell projection. Its subcellular location is the axon. It is found in the endosome membrane. It catalyses the reaction a 1,2-diacyl-sn-glycero-3-phospho-(1D-myo-inositol-3,5-bisphosphate) + H2O = a 1,2-diacyl-sn-glycero-3-phospho-(1D-myo-inositol-5-phosphate) + phosphate. It carries out the reaction a 1,2-diacyl-sn-glycero-3-phospho-(1D-myo-inositol-3-phosphate) + H2O = a 1,2-diacyl-sn-glycero-3-phospho-(1D-myo-inositol) + phosphate. The enzyme catalyses 1,2-dioctanoyl-sn-glycero-3-phospho-(1-D-myo-inositol-3-phosphate) + H2O = 1,2-dioctanoyl-sn-glycero-3-phospho-(1D-myo-inositol) + phosphate. The catalysed reaction is 1,2-dioctanoyl-sn-glycero-3-phospho-(1D-myo-inositol-3,5-bisphosphate) + H2O = 1,2-dioctanoyl-sn-glycero-3-phospho-(1D-myo-inositol-5-phosphate) + phosphate. In terms of biological role, lipid phosphatase that specifically dephosphorylates the D-3 position of phosphatidylinositol 3-phosphate and phosphatidylinositol 3,5-bisphosphate, generating phosphatidylinositol and phosphatidylinositol 5-phosphate. Regulates the level of these phosphoinositides critical for various biological processes including autophagy initiation and autophagosome maturation. The sequence is that of Phosphatidylinositol-3,5-bisphosphate 3-phosphatase MTMR2 from Pongo abelii (Sumatran orangutan).